Here is a 912-residue protein sequence, read N- to C-terminus: Intercellular adhesion molecule 5 (912 aa).

Residues 1–29 (MPGPSPGLRALLGFWVALGLGILRLSAVA) form the signal peptide. The Extracellular portion of the chain corresponds to 30 to 826 (QEPFWADLQP…RITVRVAGPW (797 aa)). 9 Ig-like C2-type domains span residues 47–127 (GGSL…PLPP), 132–232 (GENF…RLLA), 239–324 (DSQS…LLTL), 332–395 (GKLV…NGSA), 403–481 (PRLD…VTLT), 486–561 (PALD…VAVT), 566–645 (PSFE…NPLG), 659–734 (PQMD…TVGV), and 738–819 (PVVA…RRIT). An N-linked (GlcNAc...) (high mannose) asparagine glycan is attached at Asn53. Cystine bridges form between Cys54-Cys97 and Cys58-Cys101. An N-linked (GlcNAc...) asparagine glycan is attached at Asn134. Cys139 and Cys195 form a disulfide bridge. Thr179 and Thr181 each carry phosphothreonine. N-linked (GlcNAc...) asparagine glycosylation is found at Asn192 and Asn211. A disulfide bridge connects residues Cys246 and Cys297. N-linked (GlcNAc...) asparagine glycans are attached at residues Asn311, Asn366, and Asn392. The cysteines at positions 339 and 378 are disulfide-linked. Intrachain disulfides connect Cys410-Cys465, Cys493-Cys546, and Cys573-Cys638. Residues Asn576 and Asn639 are each glycosylated (N-linked (GlcNAc...) asparagine). Cys666 and Cys717 are joined by a disulfide. A disordered region spans residues 678–708 (AAGPACARGRPSPRVRCSREGAPRPARPRVS). N-linked (GlcNAc...) asparagine glycans are attached at residues Asn756, Asn787, and Asn788. A disulfide bridge connects residues Cys761 and Cys806. The helical transmembrane segment at 827 to 847 (LWIAVGGAVGGAVLLAAGAGL) threads the bilayer. Residues 848 to 912 (AFYVQSTACK…EVFAIQLTSA (65 aa)) are Cytoplasmic-facing. The segment at 880 to 902 (GGAGSGAEGGPEAEDSAESPAGG) is disordered.

Belongs to the immunoglobulin superfamily. ICAM family. In terms of processing, glycosylation at Asn-53 is critical for functional folding. As to expression, expressed on neurons in the most rostral segment of the mammalian brain, the telencephalon.

The protein resides in the membrane. Its function is as follows. ICAM proteins are ligands for the leukocyte adhesion protein LFA-1 (integrin alpha-L/beta-2). This chain is Intercellular adhesion molecule 5 (ICAM5), found in Oryctolagus cuniculus (Rabbit).